The sequence spans 90 residues: UPF0237 protein MJ1558 (90 aa).

The ACT domain occupies 5–79; that stretch reads VVSVIGQDRT…EELGVQVIVQ (75 aa).

The protein belongs to the UPF0237 family.

The sequence is that of UPF0237 protein MJ1558 from Methanocaldococcus jannaschii (strain ATCC 43067 / DSM 2661 / JAL-1 / JCM 10045 / NBRC 100440) (Methanococcus jannaschii).